The primary structure comprises 378 residues: Alcohol dehydrogenase (378 aa).

Fe cation contacts are provided by Asp195, His199, His262, and His274.

It belongs to the iron-containing alcohol dehydrogenase family. Requires Fe(2+) as cofactor. Mn(2+) is required as a cofactor.

The catalysed reaction is a primary alcohol + NAD(+) = an aldehyde + NADH + H(+). It catalyses the reaction butan-1-ol + NAD(+) = butanal + NADH + H(+). The enzyme catalyses hexan-1-ol + NAD(+) = hexanal + NADH + H(+). It carries out the reaction ethanol + NAD(+) = acetaldehyde + NADH + H(+). In terms of biological role, thermostable type III alcohol dehydrogenase. For oxidation activity, the best substrates are 1-butanol and 1-hexanol, followed by ethanol. Shows lower activity with ethylene glycol, isopentanol, isopropanol and glycerol. Displays higher reduction activity in the presence of butanal, followed by acetaldehyde. Has lower activity with hexanal and acetone. This Thermococcus barophilus protein is Alcohol dehydrogenase.